Consider the following 1302-residue polypeptide: Zinc finger protein 536 (1302 aa).

The segment at 1–26 (MEEASLCLGVSSTAPEAEPHLSGPVL) is disordered. C2H2-type zinc fingers lie at residues 130 to 152 (YPCPLCGKRFRFNSILSLHMRTH), 158 to 180 (FKCPYCDHRAAQKGNLKIHLRTH), 274 to 297 (FRCTFCKGKFKKREELDRHIRILH), 300 to 323 (YKCTLCDFAASQEEELISHVEKAH), 345 to 367 (FRCEVCGQVFSQAWFLKGHMRKH), 373 to 395 (HCCQICGRRFKEPWFLKNHMKVH), and 631 to 653 (TECPDCGRVFRTYHQVVVHSRVH). Residues 650 to 736 (SRVHKRDRKS…IGEEAGRAGG (87 aa)) form a disordered region. Over residues 657-676 (RKSDEDALHVGVGLEERRGS) the composition is skewed to basic and acidic residues. Residues 677 to 698 (GSDQESQSVSRSTTPGSSNVTE) are compositionally biased toward polar residues. 2 consecutive C2H2-type zinc fingers follow at residues 753–775 (KDCPYCGKTFRTSHHLKVHLRIH) and 781–803 (YKCPHCDYAGTQSASLKYHLERH). 4 disordered regions span residues 804–832 (HRERQNGAGPLSGQPPNQEHKDETSSKAP), 855–897 (GPAS…SKSS), 935–988 (KDTK…APTL), and 1133–1261 (NKNT…GLEK). Phosphoserine occurs at positions 828 and 829. Positions 869-883 (GDHSGQATGMPSELS) are enriched in polar residues. Basic and acidic residues predominate over residues 935–973 (KDTKDKVPSDAHPMKAHTAEGGEEKASMKPSQRKSEKSQ). Acidic residues-rich tracts occupy residues 1161 to 1171 (DLSDIASSEDM) and 1179 to 1188 (NEDEELDTEP). Residues 1198 to 1212 (LSKDGSSEGGDSLLS) are compositionally biased toward low complexity.

The protein belongs to the krueppel C2H2-type zinc-finger protein family. Expressed predominantly in the brain, while a weak signal is also detected in the heart and testis. Expression is abundant in neuronal cells of the cerebral cortex, hippocampus and hypothalamic area (at protein level).

The protein resides in the nucleus. In terms of biological role, transcriptional repressor that negatively regulates neuron differentiation by repressing retinoic acid-induced gene transcription. Binds and interrupts RARA from binding to retinoic acid response elements (RARE) composed of tandem 5'-AGGTCA-3' sites known as DR1-DR5. Recognizes and binds 2 copies of the core DNA sequence 5'-CCCCCA-3'. The sequence is that of Zinc finger protein 536 (Znf536) from Mus musculus (Mouse).